A 437-amino-acid chain; its full sequence is UDP-N-acetylmuramate--L-alanine ligase (437 aa).

Position 108 to 114 (glycine 108 to serine 114) interacts with ATP.

This sequence belongs to the MurCDEF family.

The protein resides in the cytoplasm. It carries out the reaction UDP-N-acetyl-alpha-D-muramate + L-alanine + ATP = UDP-N-acetyl-alpha-D-muramoyl-L-alanine + ADP + phosphate + H(+). Its pathway is cell wall biogenesis; peptidoglycan biosynthesis. Cell wall formation. The sequence is that of UDP-N-acetylmuramate--L-alanine ligase from Staphylococcus epidermidis (strain ATCC 12228 / FDA PCI 1200).